The primary structure comprises 1378 residues: Roundabout homolog 2 (1378 aa).

The first 21 residues, 1 to 21, serve as a signal peptide directing secretion; it reads MSLLMFTQLLLCGFLYVRVDG. Topologically, residues 22 to 859 are extracellular; sequence SRLRQEDFPP…EQITDVVKQP (838 aa). 5 consecutive Ig-like C2-type domains span residues 31–127, 133–220, 225–309, 314–409, and 418–504; these read PRIV…ASLE, DDFR…AELT, PTFL…ATLT, PQFV…LEVT, and PIIL…AVLD. C52 and C110 form a disulfide bridge. N123 is a glycosylation site (N-linked (GlcNAc...) asparagine). Disulfide bonds link C154–C203, C246–C293, and C335–C391. N-linked (GlcNAc...) asparagine glycosylation is present at N426. C439 and C488 are disulfide-bonded. 3 consecutive Fibronectin type-III domains span residues 524–618, 637–735, and 739–836; these read PPSK…TQDI, VLVR…TEEA, and PPQS…IGRR. The disordered stretch occupies residues 603–625; that stretch reads LSDPSPMSDPVRTQDISPPAQGV. N752, N782, N789, and N845 each carry an N-linked (GlcNAc...) asparagine glycan. The chain crosses the membrane as a helical span at residues 860–880; the sequence is AFIAGIGGACWVILMGFSIWL. Topologically, residues 881–1378 are cytoplasmic; the sequence is YWRRKKRKGL…NSQGQFTGEL (498 aa). 3 disordered regions span residues 1032–1084, 1124–1156, and 1215–1348; these read GFGY…PLPG, EDDDRVPTPPVRGVASSPAISFGQQSTATLTPS, and DVAD…KTEV. The segment covering 1058 to 1067 has biased composition (low complexity); it reads SSKPQKNNGS. Positions 1141–1155 are enriched in polar residues; it reads PAISFGQQSTATLTP. T1154 bears the Phosphothreonine mark. S1156 is subject to Phosphoserine. The span at 1215–1228 shows a compositional bias: acidic residues; it reads DVADDDADDEEEAL. Positions 1240-1285 are enriched in polar residues; sequence TPGSSMDNLDSSVTGKAFTSSQRPRPTSPFSTDSNTSAALSQSQRP. Residues 1319-1343 are compositionally biased toward low complexity; sequence SKPSFPSPGGHSSSGTASSKGSTGP.

This sequence belongs to the immunoglobulin superfamily. ROBO family. Interacts with SLIT2.

It localises to the membrane. Functionally, receptor for SLIT2, and probably SLIT1, which are thought to act as molecular guidance cue in cellular migration, including axonal navigation at the ventral midline of the neural tube and projection of axons to different regions during neuronal development. In Homo sapiens (Human), this protein is Roundabout homolog 2 (ROBO2).